Reading from the N-terminus, the 491-residue chain is Glutamyl-tRNA(Gln) amidotransferase subunit A (491 aa).

Catalysis depends on charge relay system residues Lys78 and Ser158. The active-site Acyl-ester intermediate is Ser182.

This sequence belongs to the amidase family. GatA subfamily. As to quaternary structure, heterotrimer of A, B and C subunits.

The catalysed reaction is L-glutamyl-tRNA(Gln) + L-glutamine + ATP + H2O = L-glutaminyl-tRNA(Gln) + L-glutamate + ADP + phosphate + H(+). Functionally, allows the formation of correctly charged Gln-tRNA(Gln) through the transamidation of misacylated Glu-tRNA(Gln) in organisms which lack glutaminyl-tRNA synthetase. The reaction takes place in the presence of glutamine and ATP through an activated gamma-phospho-Glu-tRNA(Gln). The protein is Glutamyl-tRNA(Gln) amidotransferase subunit A of Bradyrhizobium sp. (strain BTAi1 / ATCC BAA-1182).